Here is a 692-residue protein sequence, read N- to C-terminus: Ribonuclease R (692 aa).

The RNB domain maps to 204–525; that stretch reads RKDLRDLLCF…IVHRLLFHPL (322 aa). Residues 563-648 enclose the S1 motif domain; sequence KKFLDEQPAT…LTQAIEWTLI (86 aa). The disordered stretch occupies residues 651-692; that stretch reads KERSSSKKKKAKAKSNATQVKKKSSSKKKKAVSKAKKNRGGK. Residues 670-692 are compositionally biased toward basic residues; the sequence is VKKKSSSKKKKAVSKAKKNRGGK.

It belongs to the RNR ribonuclease family. RNase R subfamily.

It localises to the cytoplasm. The enzyme catalyses Exonucleolytic cleavage in the 3'- to 5'-direction to yield nucleoside 5'-phosphates.. Its function is as follows. 3'-5' exoribonuclease that releases 5'-nucleoside monophosphates and is involved in maturation of structured RNAs. This is Ribonuclease R from Chlamydia muridarum (strain MoPn / Nigg).